The chain runs to 70 residues: MLSLRPALRLLQAPLRCWAVPKAHVSAKPAETPTSPAEQAVGLSFIFITFLGPAGWILSHVENYKKRPRA.

The N-terminal 24 residues, 1–24 (MLSLRPALRLLQAPLRCWAVPKAH), are a transit peptide targeting the mitochondrion. The Mitochondrial matrix portion of the chain corresponds to 25-35 (VSAKPAETPTS). A helical membrane pass occupies residues 36-59 (PAEQAVGLSFIFITFLGPAGWILS). At 60 to 70 (HVENYKKRPRA) the chain is on the mitochondrial intermembrane side.

Belongs to the cytochrome c oxidase VIII family. In terms of assembly, component of the cytochrome c oxidase (complex IV, CIV), a multisubunit enzyme composed of 14 subunits. The complex is composed of a catalytic core of 3 subunits MT-CO1, MT-CO2 and MT-CO3, encoded in the mitochondrial DNA, and 11 supernumerary subunits COX4I, COX5A, COX5B, COX6A, COX6B, COX6C, COX7A, COX7B, COX7C, COX8 and NDUFA4, which are encoded in the nuclear genome. The complex exists as a monomer or a dimer and forms supercomplexes (SCs) in the inner mitochondrial membrane with NADH-ubiquinone oxidoreductase (complex I, CI) and ubiquinol-cytochrome c oxidoreductase (cytochrome b-c1 complex, complex III, CIII), resulting in different assemblies (supercomplex SCI(1)III(2)IV(1) and megacomplex MCI(2)III(2)IV(2)).

It is found in the mitochondrion inner membrane. Its pathway is energy metabolism; oxidative phosphorylation. Functionally, component of the cytochrome c oxidase, the last enzyme in the mitochondrial electron transport chain which drives oxidative phosphorylation. The respiratory chain contains 3 multisubunit complexes succinate dehydrogenase (complex II, CII), ubiquinol-cytochrome c oxidoreductase (cytochrome b-c1 complex, complex III, CIII) and cytochrome c oxidase (complex IV, CIV), that cooperate to transfer electrons derived from NADH and succinate to molecular oxygen, creating an electrochemical gradient over the inner membrane that drives transmembrane transport and the ATP synthase. Cytochrome c oxidase is the component of the respiratory chain that catalyzes the reduction of oxygen to water. Electrons originating from reduced cytochrome c in the intermembrane space (IMS) are transferred via the dinuclear copper A center (CU(A)) of subunit 2 and heme A of subunit 1 to the active site in subunit 1, a binuclear center (BNC) formed by heme A3 and copper B (CU(B)). The BNC reduces molecular oxygen to 2 water molecules using 4 electrons from cytochrome c in the IMS and 4 protons from the mitochondrial matrix. This chain is Cytochrome c oxidase subunit 8B, mitochondrial (COX8B), found in Ateles belzebuth (White-bellied spider monkey).